The primary structure comprises 916 residues: Isoleucine--tRNA ligase (916 aa).

The short motif at 57–67 is the 'HIGH' region element; sequence PYANGNLHMGH. Glu554 provides a ligand contact to L-isoleucyl-5'-AMP. Positions 595-599 match the 'KMSKS' region motif; the sequence is KMSKS. Position 598 (Lys598) interacts with ATP. The Zn(2+) site is built by Cys885, Cys888, Cys905, and Cys908.

It belongs to the class-I aminoacyl-tRNA synthetase family. IleS type 1 subfamily. In terms of assembly, monomer. Zn(2+) serves as cofactor.

It localises to the cytoplasm. The enzyme catalyses tRNA(Ile) + L-isoleucine + ATP = L-isoleucyl-tRNA(Ile) + AMP + diphosphate. Functionally, catalyzes the attachment of isoleucine to tRNA(Ile). As IleRS can inadvertently accommodate and process structurally similar amino acids such as valine, to avoid such errors it has two additional distinct tRNA(Ile)-dependent editing activities. One activity is designated as 'pretransfer' editing and involves the hydrolysis of activated Val-AMP. The other activity is designated 'posttransfer' editing and involves deacylation of mischarged Val-tRNA(Ile). The chain is Isoleucine--tRNA ligase from Staphylococcus saprophyticus subsp. saprophyticus (strain ATCC 15305 / DSM 20229 / NCIMB 8711 / NCTC 7292 / S-41).